The following is a 195-amino-acid chain: Probable GTP-binding protein EngB (195 aa).

Positions 22 to 195 (GLPEIALAGR…WNAILAKINK (174 aa)) constitute an EngB-type G domain. GTP contacts are provided by residues 30-37 (GRSNVGKS), 57-61 (GKTQT), 75-78 (DVPG), 142-145 (TKAD), and 174-176 (FSS). Mg(2+) contacts are provided by Ser-37 and Thr-59.

This sequence belongs to the TRAFAC class TrmE-Era-EngA-EngB-Septin-like GTPase superfamily. EngB GTPase family. Mg(2+) serves as cofactor.

Necessary for normal cell division and for the maintenance of normal septation. This chain is Probable GTP-binding protein EngB, found in Bacillus pumilus (strain SAFR-032).